Consider the following 303-residue polypeptide: N-acetyl-D-glucosamine kinase (303 aa).

ATP-binding positions include 4–11 (GFDIGGTK) and 133–140 (GVGGGLVL). H157, C177, C179, and C184 together coordinate Zn(2+).

Belongs to the ROK (NagC/XylR) family. NagK subfamily.

The enzyme catalyses N-acetyl-D-glucosamine + ATP = N-acetyl-D-glucosamine 6-phosphate + ADP + H(+). It participates in cell wall biogenesis; peptidoglycan recycling. Catalyzes the phosphorylation of N-acetyl-D-glucosamine (GlcNAc) derived from cell-wall degradation, yielding GlcNAc-6-P. The chain is N-acetyl-D-glucosamine kinase from Salmonella paratyphi A (strain ATCC 9150 / SARB42).